The chain runs to 247 residues: MLLIPAIDLKDGQCVRLKQGDMDQATVFSEDPAAMARHWVEQGARRLHLVDLNGAFAGKPRNEAAVKAILAEVGDEIPVQLGGGIRDLGTIERWLDDGLSYVIIGTAAVKDPGFLRDACTAFGGHIIVGLDAKDGKVATDGWSKLSGHEVVDLAKKYEDYGVEGIIYTDIGRDGMLQGINIDATVKLAQSVKIPVIASGGLSNLKDIDHLCAVEEHGVEGVICGRAIYSGDLNFKEAQALADKLGAA.

The Proton acceptor role is filled by aspartate 8. Aspartate 131 functions as the Proton donor in the catalytic mechanism.

It belongs to the HisA/HisF family.

The protein resides in the cytoplasm. It catalyses the reaction 1-(5-phospho-beta-D-ribosyl)-5-[(5-phospho-beta-D-ribosylamino)methylideneamino]imidazole-4-carboxamide = 5-[(5-phospho-1-deoxy-D-ribulos-1-ylimino)methylamino]-1-(5-phospho-beta-D-ribosyl)imidazole-4-carboxamide. It participates in amino-acid biosynthesis; L-histidine biosynthesis; L-histidine from 5-phospho-alpha-D-ribose 1-diphosphate: step 4/9. The protein is 1-(5-phosphoribosyl)-5-[(5-phosphoribosylamino)methylideneamino] imidazole-4-carboxamide isomerase of Ralstonia pickettii (strain 12J).